A 122-amino-acid chain; its full sequence is MVRMATKPPSMTPTPPTGAPPRDDGGSVVLERRTQRTQPPQMYQVVMLNDDYTPMEFVIVVLQEFFGKDREAATQIMLKIHLDGKGVCGVYSRDVAATKVEQVREAAHKAGHPLQCLSEPVE.

The disordered stretch occupies residues methionine 1–serine 27. The span at serine 10–alanine 19 shows a compositional bias: pro residues.

It belongs to the ClpS family. In terms of assembly, binds to the N-terminal domain of the chaperone ClpA.

Its function is as follows. Involved in the modulation of the specificity of the ClpAP-mediated ATP-dependent protein degradation. This Paracidovorax citrulli (strain AAC00-1) (Acidovorax citrulli) protein is ATP-dependent Clp protease adapter protein ClpS.